We begin with the raw amino-acid sequence, 102 residues long: Large ribosomal subunit protein bL21 (102 aa).

It belongs to the bacterial ribosomal protein bL21 family. As to quaternary structure, part of the 50S ribosomal subunit. Contacts protein L20.

In terms of biological role, this protein binds to 23S rRNA in the presence of protein L20. The sequence is that of Large ribosomal subunit protein bL21 from Campylobacter jejuni subsp. doylei (strain ATCC BAA-1458 / RM4099 / 269.97).